We begin with the raw amino-acid sequence, 286 residues long: Urease accessory protein UreD 2 (286 aa).

The protein belongs to the UreD family. As to quaternary structure, ureD, UreF and UreG form a complex that acts as a GTP-hydrolysis-dependent molecular chaperone, activating the urease apoprotein by helping to assemble the nickel containing metallocenter of UreC. The UreE protein probably delivers the nickel.

It is found in the cytoplasm. Required for maturation of urease via the functional incorporation of the urease nickel metallocenter. This Bradyrhizobium sp. (strain BTAi1 / ATCC BAA-1182) protein is Urease accessory protein UreD 2.